The primary structure comprises 122 residues: Large ribosomal subunit protein uL14c (122 aa).

It belongs to the universal ribosomal protein uL14 family. As to quaternary structure, part of the 50S ribosomal subunit.

It is found in the plastid. The protein localises to the chloroplast. Binds to 23S rRNA. The chain is Large ribosomal subunit protein uL14c from Liriodendron tulipifera (Tuliptree).